A 140-amino-acid chain; its full sequence is Arsenate reductase ArsI2 (140 aa).

Residue cysteine 10 is the Nucleophile; cysteine thioarsenate intermediate of the active site.

It belongs to the ArsC family.

It catalyses the reaction [glutaredoxin]-dithiol + arsenate + glutathione + H(+) = glutathionyl-S-S-[glutaredoxin] + arsenite + H2O. Its function is as follows. Catalyzes the reduction of arsenate [As(V)] to arsenite [As(III)]. Does not constitute the major arsenate reductase in cells: essential only in the absence of ArsC (AC P74313). The chain is Arsenate reductase ArsI2 from Synechocystis sp. (strain ATCC 27184 / PCC 6803 / Kazusa).